Here is a 163-residue protein sequence, read N- to C-terminus: COP9 signalosome complex subunit 9 (163 aa).

One can recognise a PCI domain in the interval 5–120 (EVLHAVLDPK…SVGRRIKVLR (116 aa)).

In terms of assembly, component of a COP9 signalosome-like (CSN) complex.

Its subcellular location is the cytoplasm. The protein localises to the nucleus. Its function is as follows. Component of the COP9 signalosome (CSN) complex that acts as a regulator of the ubiquitin (Ubl) conjugation pathway by mediating the deneddylation of the cullin subunit of SCF-type E3 ubiquitin-protein ligase complexes. The complex is involved in the regulation of the mating pheromone response. In Eremothecium gossypii (strain ATCC 10895 / CBS 109.51 / FGSC 9923 / NRRL Y-1056) (Yeast), this protein is COP9 signalosome complex subunit 9 (CSN9).